The primary structure comprises 191 residues: GDP-mannose pyrophosphatase (191 aa).

GDP-alpha-D-mannose contacts are provided by residues Tyr17, 38 to 40 (KRE), Arg67, and 85 to 87 (AGL). The region spanning 43–180 (DRGNGATILL…EIRDGKTVLL (138 aa)) is the Nudix hydrolase domain. Positions 85, 100, and 104 each coordinate Mg(2+). Positions 86–106 (GLLDNDEPEVCIRKEAIEETG) match the Nudix box motif. Residues Glu104, Glu127, 150–151 (DE), and Lys176 contribute to the GDP-alpha-D-mannose site. Glu151 is a binding site for Mg(2+).

This sequence belongs to the Nudix hydrolase family. NudK subfamily. Homodimer. Mg(2+) is required as a cofactor.

It catalyses the reaction GDP-alpha-D-mannose + H2O = alpha-D-mannose 1-phosphate + GMP + 2 H(+). In terms of biological role, nucleoside diphosphate sugar hydrolase that hydrolyzes GDP-mannose as its preferred substrate, yielding GMP and mannose-1-phosphate. The chain is GDP-mannose pyrophosphatase (nudK) from Escherichia coli (strain SMS-3-5 / SECEC).